Consider the following 1176-residue polypeptide: Pesticidal crystal protein Cry1Aa (1176 aa).

This sequence belongs to the delta endotoxin family.

Promotes colloidosmotic lysis by binding to the midgut epithelial cells of many lepidopteran larvae. This chain is Pesticidal crystal protein Cry1Aa (cry1Aa), found in Bacillus thuringiensis subsp. aizawai.